Reading from the N-terminus, the 257-residue chain is Phosphomannomutase (257 aa).

Catalysis depends on aspartate 19, which acts as the Nucleophile. Aspartate 19 and aspartate 21 together coordinate Mg(2+). Residue aspartate 21 is the Proton donor/acceptor of the active site. Arginine 28, arginine 133, arginine 144, arginine 151, serine 189, and aspartate 191 together coordinate alpha-D-mannose 1-phosphate. 4 residues coordinate Mg(2+): aspartate 219, phenylalanine 231, aspartate 233, and threonine 236.

This sequence belongs to the eukaryotic PMM family. As to quaternary structure, homodimer.

Its subcellular location is the cytoplasm. It catalyses the reaction alpha-D-mannose 1-phosphate = D-mannose 6-phosphate. The protein operates within nucleotide-sugar biosynthesis; GDP-alpha-D-mannose biosynthesis; alpha-D-mannose 1-phosphate from D-fructose 6-phosphate: step 2/2. Its function is as follows. Involved in the synthesis of the GDP-mannose and dolichol-phosphate-mannose required for a number of critical mannosyl transfer reactions. This chain is Phosphomannomutase (pmm1), found in Schizosaccharomyces pombe (strain 972 / ATCC 24843) (Fission yeast).